A 317-amino-acid chain; its full sequence is GTPase Era (317 aa).

One can recognise an Era-type G domain in the interval Arg-17 to Glu-190. Positions Gly-25–Ser-32 are G1. Gly-25–Ser-32 provides a ligand contact to GTP. Residues Gln-51–His-55 are G2. The tract at residues Asp-72–Gly-75 is G3. Residues Asp-72–Leu-76 and Thr-135–Asp-138 contribute to the GTP site. The segment at Thr-135–Asp-138 is G4. The tract at residues Val-169–Ala-171 is G5. A KH type-2 domain is found at Val-221 to Lys-303.

It belongs to the TRAFAC class TrmE-Era-EngA-EngB-Septin-like GTPase superfamily. Era GTPase family. In terms of assembly, monomer.

It is found in the cytoplasm. Its subcellular location is the cell membrane. Functionally, an essential GTPase that binds both GDP and GTP, with rapid nucleotide exchange. Plays a role in 16S rRNA processing and 30S ribosomal subunit biogenesis and possibly also in cell cycle regulation and energy metabolism. The protein is GTPase Era of Streptomyces coelicolor (strain ATCC BAA-471 / A3(2) / M145).